A 198-amino-acid polypeptide reads, in one-letter code: Small ribosomal subunit protein uS4 (198 aa).

Residues 91–154 form the S4 RNA-binding domain; sequence SRLDNVVYRL…KNLNIVQEAV (64 aa).

This sequence belongs to the universal ribosomal protein uS4 family. As to quaternary structure, part of the 30S ribosomal subunit. Contacts protein S5. The interaction surface between S4 and S5 is involved in control of translational fidelity.

Its function is as follows. One of the primary rRNA binding proteins, it binds directly to 16S rRNA where it nucleates assembly of the body of the 30S subunit. With S5 and S12 plays an important role in translational accuracy. This is Small ribosomal subunit protein uS4 from Onion yellows phytoplasma (strain OY-M).